The primary structure comprises 692 residues: Elongation factor G 2 (692 aa).

Residues 8 to 283 form the tr-type G domain; that stretch reads KDVRNIGIMA…GVVNYLPSPL (276 aa). GTP contacts are provided by residues 17–24, 81–85, and 135–138; these read AHIDAGKT, DTPGH, and NKMD.

The protein belongs to the TRAFAC class translation factor GTPase superfamily. Classic translation factor GTPase family. EF-G/EF-2 subfamily.

The protein localises to the cytoplasm. Its function is as follows. Catalyzes the GTP-dependent ribosomal translocation step during translation elongation. During this step, the ribosome changes from the pre-translocational (PRE) to the post-translocational (POST) state as the newly formed A-site-bound peptidyl-tRNA and P-site-bound deacylated tRNA move to the P and E sites, respectively. Catalyzes the coordinated movement of the two tRNA molecules, the mRNA and conformational changes in the ribosome. In Desulfotalea psychrophila (strain LSv54 / DSM 12343), this protein is Elongation factor G 2.